A 190-amino-acid polypeptide reads, in one-letter code: Endoribonuclease YbeY (190 aa).

The segment at 1–20 is disordered; it reads MDVENDRPPRRGAAGERNSG. Positions 147, 151, and 157 each coordinate Zn(2+).

Belongs to the endoribonuclease YbeY family. Zn(2+) serves as cofactor.

It is found in the cytoplasm. In terms of biological role, single strand-specific metallo-endoribonuclease involved in late-stage 70S ribosome quality control and in maturation of the 3' terminus of the 16S rRNA. The sequence is that of Endoribonuclease YbeY from Nitrobacter hamburgensis (strain DSM 10229 / NCIMB 13809 / X14).